The primary structure comprises 522 residues: Ribonuclease Y (522 aa).

Residues 3 to 23 (ELIMYILATAVVSIGVGIVAG) traverse the membrane as a helical segment. In terms of domain architecture, KH spans 212–272 (CVSIFNIESD…VRREVARLSL (61 aa)). Residues 338-431 (LLQHSREVAK…VQVCDAISGA (94 aa)) enclose the HD domain.

It belongs to the RNase Y family.

It is found in the cell membrane. Endoribonuclease that initiates mRNA decay. The polypeptide is Ribonuclease Y (Cytophaga hutchinsonii (strain ATCC 33406 / DSM 1761 / CIP 103989 / NBRC 15051 / NCIMB 9469 / D465)).